Here is a 209-residue protein sequence, read N- to C-terminus: Ribosomal RNA large subunit methyltransferase E (209 aa).

Residues G63, W65, D83, D99, and D124 each contribute to the S-adenosyl-L-methionine site. K164 serves as the catalytic Proton acceptor.

The protein belongs to the class I-like SAM-binding methyltransferase superfamily. RNA methyltransferase RlmE family.

The protein localises to the cytoplasm. It carries out the reaction uridine(2552) in 23S rRNA + S-adenosyl-L-methionine = 2'-O-methyluridine(2552) in 23S rRNA + S-adenosyl-L-homocysteine + H(+). In terms of biological role, specifically methylates the uridine in position 2552 of 23S rRNA at the 2'-O position of the ribose in the fully assembled 50S ribosomal subunit. The polypeptide is Ribosomal RNA large subunit methyltransferase E (Shigella dysenteriae serotype 1 (strain Sd197)).